The sequence spans 312 residues: Cytochrome c biogenesis protein CcsA (312 aa).

8 helical membrane passes run Ile9–Phe29, Gly44–Gly64, Leu71–Phe91, Gly111–Leu131, Met143–Ile163, Val216–Asn236, Trp251–Leu271, and Ala277–Leu297.

It belongs to the CcmF/CycK/Ccl1/NrfE/CcsA family. May interact with Ccs1.

Its subcellular location is the plastid. The protein localises to the chloroplast thylakoid membrane. Its function is as follows. Required during biogenesis of c-type cytochromes (cytochrome c6 and cytochrome f) at the step of heme attachment. The sequence is that of Cytochrome c biogenesis protein CcsA from Atropa belladonna (Belladonna).